The chain runs to 78 residues: MSTIEERVKKIVAEQLGVKEEEVTVEKSFVDDLGADSLDTVELVMALEEEFETEIPDEEAEKITTVQAAIDYVKAHQA.

In terms of domain architecture, Carrier spans 2-77 (STIEERVKKI…AAIDYVKAHQ (76 aa)). Serine 37 carries the O-(pantetheine 4'-phosphoryl)serine modification.

This sequence belongs to the acyl carrier protein (ACP) family. In terms of processing, 4'-phosphopantetheine is transferred from CoA to a specific serine of apo-ACP by AcpS. This modification is essential for activity because fatty acids are bound in thioester linkage to the sulfhydryl of the prosthetic group.

It is found in the cytoplasm. It participates in lipid metabolism; fatty acid biosynthesis. Its function is as follows. Carrier of the growing fatty acid chain in fatty acid biosynthesis. This Pseudomonas putida (strain ATCC 47054 / DSM 6125 / CFBP 8728 / NCIMB 11950 / KT2440) protein is Acyl carrier protein.